The primary structure comprises 45 residues: Large ribosomal subunit protein bL34 (45 aa).

The interval methionine 1 to alanine 45 is disordered. Residues asparagine 10–alanine 27 are compositionally biased toward basic residues.

This sequence belongs to the bacterial ribosomal protein bL34 family.

In Micrococcus luteus (strain ATCC 4698 / DSM 20030 / JCM 1464 / CCM 169 / CCUG 5858 / IAM 1056 / NBRC 3333 / NCIMB 9278 / NCTC 2665 / VKM Ac-2230) (Micrococcus lysodeikticus), this protein is Large ribosomal subunit protein bL34.